Consider the following 801-residue polypeptide: Probable inorganic carbon transporter subunit DabA (801 aa).

The Zn(2+) site is built by C332, D334, H500, and C515.

Belongs to the inorganic carbon transporter (TC 9.A.2) DabA family. As to quaternary structure, forms a complex with DabB. The cofactor is Zn(2+).

Its subcellular location is the cell inner membrane. Its function is as follows. Part of an energy-coupled inorganic carbon pump. The sequence is that of Probable inorganic carbon transporter subunit DabA from Marinobacter nauticus (strain ATCC 700491 / DSM 11845 / VT8) (Marinobacter aquaeolei).